A 288-amino-acid chain; its full sequence is Protoheme IX farnesyltransferase 2 (288 aa).

9 helical membrane-spanning segments follow: residues 8-28, 36-56, 85-105, 108-128, 131-151, 152-172, 211-231, 233-252, and 267-287; these read ITKPGIIFGNLISVAAGFFLA, LMLFLTTLAGVGLVIASGCVV, VAFVYALAMLLLGTALLFQLV, LSAVVVLLGYVYYVFFYTMWY, NSVYGTLVGSISGAVPPLVGY, LAVTNFISLEAILLFTMFCLW, AYVVAFGAVSLGLFLLGEAGY, YLAVAAVVCLMWTKVTFRSI, and VSLLVVMGISGVLGVELIPLA.

It belongs to the UbiA prenyltransferase family. Protoheme IX farnesyltransferase subfamily.

It localises to the cell inner membrane. The enzyme catalyses heme b + (2E,6E)-farnesyl diphosphate + H2O = Fe(II)-heme o + diphosphate. Its pathway is porphyrin-containing compound metabolism; heme O biosynthesis; heme O from protoheme: step 1/1. Converts heme B (protoheme IX) to heme O by substitution of the vinyl group on carbon 2 of heme B porphyrin ring with a hydroxyethyl farnesyl side group. This chain is Protoheme IX farnesyltransferase 2, found in Vibrio parahaemolyticus serotype O3:K6 (strain RIMD 2210633).